The chain runs to 190 residues: Shikimate kinase (190 aa).

Position 26 to 31 (26 to 31 (GSGKST)) interacts with ATP. Ser-30 lines the Mg(2+) pocket. Substrate contacts are provided by Asp-48, Arg-72, and Gly-94. Residue Arg-133 coordinates ATP. Substrate is bound at residue Arg-152.

This sequence belongs to the shikimate kinase family. In terms of assembly, monomer. Requires Mg(2+) as cofactor.

The protein localises to the cytoplasm. The catalysed reaction is shikimate + ATP = 3-phosphoshikimate + ADP + H(+). Its pathway is metabolic intermediate biosynthesis; chorismate biosynthesis; chorismate from D-erythrose 4-phosphate and phosphoenolpyruvate: step 5/7. Functionally, catalyzes the specific phosphorylation of the 3-hydroxyl group of shikimic acid using ATP as a cosubstrate. The polypeptide is Shikimate kinase (Prochlorococcus marinus (strain SARG / CCMP1375 / SS120)).